The primary structure comprises 484 residues: tRNA-2-methylthio-N(6)-dimethylallyladenosine synthase (484 aa).

Residues 29 to 149 (GVFHIHTLGC…LPKLLDQNRA (121 aa)) form the MTTase N-terminal domain. [4Fe-4S] cluster-binding residues include Cys38, Cys78, Cys112, Cys186, Cys190, and Cys193. In terms of domain architecture, Radical SAM core spans 172 to 401 (RASRISSWVA…VALQEQITEE (230 aa)). Residues 404 to 474 (ATFEGRDVEV…RHNLLADPDV (71 aa)) form the TRAM domain.

The protein belongs to the methylthiotransferase family. MiaB subfamily. As to quaternary structure, monomer. [4Fe-4S] cluster serves as cofactor.

Its subcellular location is the cytoplasm. It carries out the reaction N(6)-dimethylallyladenosine(37) in tRNA + (sulfur carrier)-SH + AH2 + 2 S-adenosyl-L-methionine = 2-methylsulfanyl-N(6)-dimethylallyladenosine(37) in tRNA + (sulfur carrier)-H + 5'-deoxyadenosine + L-methionine + A + S-adenosyl-L-homocysteine + 2 H(+). Catalyzes the methylthiolation of N6-(dimethylallyl)adenosine (i(6)A), leading to the formation of 2-methylthio-N6-(dimethylallyl)adenosine (ms(2)i(6)A) at position 37 in tRNAs that read codons beginning with uridine. The protein is tRNA-2-methylthio-N(6)-dimethylallyladenosine synthase of Bifidobacterium longum (strain DJO10A).